The primary structure comprises 173 residues: Myeloid-derived growth factor (173 aa).

The first 31 residues, 1-31 (MAAPSGGWNGVGASLWAALLLGAVALRPAEA), serve as a signal peptide directing secretion.

The protein belongs to the MYDGF family. In terms of tissue distribution, expressed in eosinophils (at protein level). Expressed in bone marrow cells. Expressed in synovial tissue. Found in synovial fluid of patients with arthropaties.

Its subcellular location is the secreted. It localises to the endoplasmic reticulum-Golgi intermediate compartment. The protein resides in the endoplasmic reticulum. The protein localises to the golgi apparatus. In terms of biological role, bone marrow-derived monocyte and paracrine-acting protein that promotes cardiac myocyte survival and adaptive angiogenesis for cardiac protection and/or repair after myocardial infarction (MI). Stimulates endothelial cell proliferation through a MAPK1/3-, STAT3- and CCND1-mediated signaling pathway. Inhibits cardiac myocyte apoptosis in a PI3K/AKT-dependent signaling pathway. Involved in endothelial cell proliferation and angiogenesis. This Homo sapiens (Human) protein is Myeloid-derived growth factor.